Reading from the N-terminus, the 504-residue chain is MNPESFAAGERRVSPAYVRQGCEARRAHEHLIRLLLEQGKCPEDGWDESTLELFLHELAVMDSNNFLGNCGVGEREGRVASALVARRHYRFIHGIGRSGDISAVQPKAAGSSLLNKITNSLVLNVIKLAGVHSVASCFVVPMATGMSLTLCFLTLRHKRPKAKYIIWPRIDQKSCFKSMVTAGFEPVVIENVLEGDELRTDLKAVEAKIQELGPEHILCLHSTTACFAPRVPDRLEELAVICANYDIPHVVNNAYGLQSSKCMHLIQQGARVGRIDAFVQSLDKNFMVPVGGAIIAGFNEPFIQDISKMYPGRASASPSLDVLITLLSLGCSGYRKLLKERKEMFVYLSTQLKKLAEAHNERLLQTPHNPISLAMTLKTIDGHHDKAVTQLGSMLFTRQVSGARAVPLGNVQTVSGHTFRGFMSHADNYPCAYLNAAAAIGMKMQDVDLFIKRLDKCLNIVRKEQTRASVVSGADRNKAEDADIEEMALKLDDVLGDVGQGPAL.

The tetramerization stretch occupies residues 1 to 44 (MNPESFAAGERRVSPAYVRQGCEARRAHEHLIRLLLEQGKCPED). Ser14 carries the phosphoserine modification. Arg75 is a binding site for pyridoxal 5'-phosphate. The tract at residues 96 to 106 (GRSGDISAVQP) is phosphate loop (P-loop). Substrate-binding residues include Arg97, Ser98, and Gln105. Residue Arg271 participates in tRNA binding. The residue at position 284 (Lys284) is an N6-(pyridoxal phosphate)lysine. Substrate is bound at residue Arg313. Arg398 and Lys463 together coordinate tRNA.

It belongs to the SepSecS family. Homotetramer formed by a catalytic dimer and a non-catalytic dimer serving as a binding platform that orients tRNASec for catalysis. Each tetramer binds the CCA ends of two tRNAs which point to the active sites of the catalytic dimer. The cofactor is pyridoxal 5'-phosphate.

The protein localises to the cytoplasm. It carries out the reaction O-phospho-L-seryl-tRNA(Sec) + selenophosphate + H2O = L-selenocysteinyl-tRNA(Sec) + 2 phosphate. It participates in aminoacyl-tRNA biosynthesis; selenocysteinyl-tRNA(Sec) biosynthesis; selenocysteinyl-tRNA(Sec) from L-seryl-tRNA(Sec) (archaeal/eukaryal route): step 2/2. Converts O-phosphoseryl-tRNA(Sec) to selenocysteinyl-tRNA(Sec) required for selenoprotein biosynthesis. This chain is O-phosphoseryl-tRNA(Sec) selenium transferase (Sepsecs), found in Mus musculus (Mouse).